The primary structure comprises 470 residues: Serine hydroxymethyltransferase, cytosolic (470 aa).

The span at 1–11 shows a compositional bias: polar residues; the sequence is MSAYALSQSHR. The segment at 1–23 is disordered; the sequence is MSAYALSQSHRQLTEGHLKDTDP. Ser-2 bears the N-acetylserine mark. Residues 12 to 23 show a composition bias toward basic and acidic residues; the sequence is QLTEGHLKDTDP. Position 249 is an N6-(pyridoxal phosphate)lysine (Lys-249).

It belongs to the SHMT family. As to quaternary structure, homotetramer. Pyridoxal 5'-phosphate serves as cofactor.

The protein localises to the cytoplasm. It catalyses the reaction (6R)-5,10-methylene-5,6,7,8-tetrahydrofolate + glycine + H2O = (6S)-5,6,7,8-tetrahydrofolate + L-serine. It functions in the pathway one-carbon metabolism; tetrahydrofolate interconversion. In terms of biological role, interconversion of serine and glycine. This is Serine hydroxymethyltransferase, cytosolic (SHM2) from Candida albicans (strain SC5314 / ATCC MYA-2876) (Yeast).